The following is a 43-amino-acid chain: Truncated K3L homolog (43 aa).

Belongs to the orthopoxvirus OPG041 family.

The polypeptide is Truncated K3L homolog (OPG041) (Cynomys gunnisoni (Gunnison's prairie dog)).